A 180-amino-acid chain; its full sequence is Homeobox protein ceh-12 (180 aa).

Residues 15 to 37 (SSQNEDQKLESHPSPPSQIPNYS) are disordered. Positions 110–169 (MRRPRTAFSSEQLVQLEKQFSDNRYLSRPRRYQLAQQLSLSETQIKIWFQNRRMKNKRCP) form a DNA-binding region, homeobox.

In terms of tissue distribution, expressed in VB motor neurons in the ventral nerve cord.

The protein resides in the nucleus. In terms of biological role, transcription factor. Plays a role, downstream from homeobox protein unc-4 and Wnt signaling, in specifying synaptic inputs to A-class motor neurons. Involved in patterning of the synaptic outputs of the postmitotic DA class cholinergic motor neurons. This Caenorhabditis elegans protein is Homeobox protein ceh-12 (ceh-12).